A 379-amino-acid polypeptide reads, in one-letter code: Glucose-1-phosphate adenylyltransferase (379 aa).

Residues G164, 179 to 180, and S190 contribute to the alpha-D-glucose 1-phosphate site; that span reads EK.

It belongs to the bacterial/plant glucose-1-phosphate adenylyltransferase family. In terms of assembly, homotetramer.

The enzyme catalyses alpha-D-glucose 1-phosphate + ATP + H(+) = ADP-alpha-D-glucose + diphosphate. Its pathway is glycan biosynthesis; glycogen biosynthesis. Involved in the biosynthesis of ADP-glucose, a building block required for the elongation reactions to produce glycogen. Catalyzes the reaction between ATP and alpha-D-glucose 1-phosphate (G1P) to produce pyrophosphate and ADP-Glc. The polypeptide is Glucose-1-phosphate adenylyltransferase (Lactiplantibacillus plantarum (strain ATCC BAA-793 / NCIMB 8826 / WCFS1) (Lactobacillus plantarum)).